A 128-amino-acid polypeptide reads, in one-letter code: MGLIWGLFSVIIASVAQLSLGFAASHLPPMTHLWDFIAALLAFGLDARILLLGLLGYLLSVFCWYKTLHKLALSKAYALLSMSYVLVWIASMVLPGWEGTFSLKALLGVACIMSGLMLIFLPTTKQRY.

Residues 1–2 (MG) are Cytoplasmic-facing. Residues 3-23 (LIWGLFSVIIASVAQLSLGFA) form a helical membrane-spanning segment. The Periplasmic portion of the chain corresponds to 24–35 (ASHLPPMTHLWD). Residues 36-56 (FIAALLAFGLDARILLLGLLG) traverse the membrane as a helical segment. Residues 57–76 (YLLSVFCWYKTLHKLALSKA) are Cytoplasmic-facing. The chain crosses the membrane as a helical span at residues 77 to 97 (YALLSMSYVLVWIASMVLPGW). Residues 98 to 100 (EGT) lie on the Periplasmic side of the membrane. The helical transmembrane segment at 101 to 121 (FSLKALLGVACIMSGLMLIFL) threads the bilayer. The Cytoplasmic segment spans residues 122-128 (PTTKQRY).

This sequence belongs to the ArnF family. In terms of assembly, heterodimer of ArnE and ArnF.

Its subcellular location is the cell inner membrane. Its pathway is bacterial outer membrane biogenesis; lipopolysaccharide biosynthesis. Functionally, translocates 4-amino-4-deoxy-L-arabinose-phosphoundecaprenol (alpha-L-Ara4N-phosphoundecaprenol) from the cytoplasmic to the periplasmic side of the inner membrane. The protein is Probable 4-amino-4-deoxy-L-arabinose-phosphoundecaprenol flippase subunit ArnF of Shigella boydii serotype 4 (strain Sb227).